The chain runs to 278 residues: Tyrosine-protein phosphatase pmp1 (278 aa).

The 155-residue stretch at 60-214 (GPVCIYPPNI…LSEYQQIIRK (155 aa)) folds into the Tyrosine-protein phosphatase domain. The Phosphocysteine intermediate role is filled by C158. Positions 217–278 (SQGPYQSSSL…SSGSISNDAS (62 aa)) are disordered. Positions 252 to 278 (SPSTSESSMFTNLRRTRSSGSISNDAS) are enriched in polar residues.

The protein belongs to the protein-tyrosine phosphatase family. Non-receptor class dual specificity subfamily.

It carries out the reaction O-phospho-L-tyrosyl-[protein] + H2O = L-tyrosyl-[protein] + phosphate. Functionally, dual specificity phosphatase that dephosphorylates MAP kinase pmk1 on a Tyr. Has a role in chloride ion homeostasis by inactivating this pmk1 MAP kinase pathway. This chain is Tyrosine-protein phosphatase pmp1 (pmp1), found in Schizosaccharomyces pombe (strain 972 / ATCC 24843) (Fission yeast).